Consider the following 180-residue polypeptide: Fetal and adult testis-expressed transcript protein homolog (180 aa).

Positions 77–108 (GPQLRGVGVVGEQGDGGAQPQENPGGSQGMRS) are disordered. Over residues 84 to 93 (GVVGEQGDGG) the composition is skewed to gly residues. Residues 96-107 (PQENPGGSQGMR) show a composition bias toward polar residues. The helical transmembrane segment at 160 to 178 (VLLFTMLLSSCITNLWLWM) threads the bilayer.

As to quaternary structure, interacts with BIK and RNF183. Interacts with IMMT/MIC60and EMD.

Its subcellular location is the mitochondrion. It is found in the mitochondrion outer membrane. The protein resides in the endoplasmic reticulum membrane. Its function is as follows. Involved in the regulation of endoplasmic reticulum (ER)-mitochondria coupling. Negatively regulates the ER-mitochondria distance and Ca(2+) transfer from ER to mitochondria possibly implicating it in the regulation of apoptosis. May collaborate with RNF183 to restrain BIK protein levels thus regulating apoptotic signaling. This chain is Fetal and adult testis-expressed transcript protein homolog (FATE1), found in Bos taurus (Bovine).